Reading from the N-terminus, the 423-residue chain is uncharacterized protein (423 aa).

3 residues coordinate Mg(2+): lysine 181, aspartate 183, and glutamate 184. Lysine 181 carries the N6-carboxylysine modification.

It belongs to the RuBisCO large chain family. Type IV subfamily. It depends on Mg(2+) as a cofactor.

In terms of biological role, may be involved in sulfur metabolism and oxidative stress response. Does not show RuBisCO activity. This is an uncharacterized protein from Bordetella bronchiseptica (strain ATCC BAA-588 / NCTC 13252 / RB50) (Alcaligenes bronchisepticus).